The chain runs to 818 residues: Phenylalanine--tRNA ligase beta subunit (818 aa).

Positions 39–148 (AAELQKFEVA…EDAVVGENFT (110 aa)) constitute a tRNA-binding domain. One can recognise a B5 domain in the interval 423 to 498 (PQKKPLDFSA…RIYGYDKIES (76 aa)). Mg(2+) contacts are provided by Asp-476, Asp-482, Glu-485, and Glu-486. One can recognise an FDX-ACB domain in the interval 724 to 817 (SDFQANFRDY…IEQKFQGTLR (94 aa)).

It belongs to the phenylalanyl-tRNA synthetase beta subunit family. Type 1 subfamily. In terms of assembly, tetramer of two alpha and two beta subunits. The cofactor is Mg(2+).

The protein resides in the cytoplasm. It carries out the reaction tRNA(Phe) + L-phenylalanine + ATP = L-phenylalanyl-tRNA(Phe) + AMP + diphosphate + H(+). The protein is Phenylalanine--tRNA ligase beta subunit of Rickettsia felis (strain ATCC VR-1525 / URRWXCal2) (Rickettsia azadi).